A 1713-amino-acid chain; its full sequence is Serine/threonine-protein kinase MRCK beta (1713 aa).

Residues 76–342 enclose the Protein kinase domain; sequence FEIIKVIGRG…IEDFKKHAFF (267 aa). ATP contacts are provided by residues 82–90 and Lys105; that span reads IGRGAFGEV. Asp200 (proton acceptor) is an active-site residue. Residues Ser221 and Ser233 each carry the phosphoserine; by autocatalysis modification. Thr239 carries the post-translational modification Phosphothreonine; by autocatalysis. The AGC-kinase C-terminal domain maps to 343–413; sequence EGLNWENIRN…TTESCFSDRG (71 aa). A Phosphothreonine modification is found at Thr423. Residues 434–649 adopt a coiled-coil conformation; that stretch reads LENSLQIEAY…ASKERKLREH (216 aa). Positions 461-485 are disordered; the sequence is LQESTQTVQSLHGSTRALGNSNRDK. A compositionally biased stretch (polar residues) spans 463-481; it reads ESTQTVQSLHGSTRALGNS. At Arg671 the chain carries Omega-N-methylarginine. 2 coiled-coil regions span residues 681 to 815 and 882 to 939; these read QEIS…AHWE and ALEA…FRAD. Phosphoserine is present on Ser927. The residue at position 954 (Tyr954) is a Phosphotyrosine. Polar residues-rich tracts occupy residues 971-994 and 1001-1014; these read ASDQ…TSTE and RSQQ…LPNT. The disordered stretch occupies residues 971-1014; sequence ASDQETQASKLDLSPSVSVATSTEQQEDAARSQQRPSTVPLPNT. The segment at 1026 to 1076 adopts a Phorbol-ester/DAG-type zinc-finger fold; it reads AHQFSIKSFPSPTQCSHCTSLMVGLIRQGYACEVCAFSCHVSCKDSAPQVC. The region spanning 1096-1215 is the PH domain; the sequence is GTAYKGYVKV…WVGILEGLQA (120 aa). A CNH domain is found at 1241 to 1515; sequence IKTVLAAAIV…RPLNSDGSLN (275 aa). A CRIB domain is found at 1585–1598; it reads ISNPTNFNHVAHMG. A disordered region spans residues 1615 to 1713; that stretch reads PTAQEEKQGP…EGLDQPACDA (99 aa). Residues 1666–1677 show a composition bias toward basic and acidic residues; that stretch reads DFDKEPDSDSTK. Residues Ser1682, Ser1684, Ser1688, Ser1692, and Ser1695 each carry the phosphoserine modification.

It belongs to the protein kinase superfamily. AGC Ser/Thr protein kinase family. DMPK subfamily. Homodimer and homotetramer via the coiled coil regions. Interacts tightly with GTP-bound but not GDP-bound CDC42. Interacts with TJP1; this interaction requires the presence of catalytically active CDC42. Forms a tripartite complex with MYO18A and LURAP1 with the latter acting as an adapter connecting CDC42BPB and MYO18A. LURAP1 binding results in activation of CDC42BPB by abolition of its negative autoregulation. Interacts with STRIP1, STRN3 and SIKE1. Interacts with CPNE4 (via VWFA domain). Interacts with LURAP1. Interacts (via AGC-kinase C-terminal domain) with FAM89B/LRAP25 (via LRR repeat). Forms a tripartite complex with FAM89B/LRAP25 and LIMK1. Mg(2+) is required as a cofactor. In terms of processing, proteolytically cleaved by caspases upon apoptosis induction. As to expression, expressed in all tissues examined with highest levels in lung and kidney.

Its subcellular location is the cytoplasm. The protein resides in the cell membrane. The protein localises to the cell junction. It is found in the cell projection. It localises to the lamellipodium. The catalysed reaction is L-seryl-[protein] + ATP = O-phospho-L-seryl-[protein] + ADP + H(+). It catalyses the reaction L-threonyl-[protein] + ATP = O-phospho-L-threonyl-[protein] + ADP + H(+). Maintained in an inactive, closed conformation by an interaction between the kinase domain and the negative autoregulatory C-terminal coiled-coil region. Agonist binding to the phorbol ester binding site disrupts this, releasing the kinase domain to allow N-terminus-mediated dimerization and kinase activation by transautophosphorylation. Inhibited by chelerythrine chloride. In terms of biological role, serine/threonine-protein kinase which is an important downstream effector of CDC42 and plays a role in the regulation of cytoskeleton reorganization and cell migration. Regulates actin cytoskeletal reorganization via phosphorylation of PPP1R12C and MYL9/MLC2. In concert with MYO18A and LURAP1, is involved in modulating lamellar actomyosin retrograde flow that is crucial to cell protrusion and migration. Phosphorylates PPP1R12A. In concert with FAM89B/LRAP25 mediates the targeting of LIMK1 to the lamellipodium resulting in its activation and subsequent phosphorylation of CFL1 which is important for lamellipodial F-actin regulation. In Rattus norvegicus (Rat), this protein is Serine/threonine-protein kinase MRCK beta.